The sequence spans 37 residues: Protein 6.3 (37 aa).

This chain is Protein 6.3, found in Escherichia phage T7 (Bacteriophage T7).